Here is a 235-residue protein sequence, read N- to C-terminus: Ion-translocating oxidoreductase complex subunit E (235 aa).

The next 5 membrane-spanning stretches (helical) occupy residues 63–83 (LGLGLATMLVLTCTNTVISLF), 93–113 (IPIYVMIIATTVTAVQLLMNA), 117–137 (TLYQSLGIFIPLIVTNCIIIG), 152–172 (IWDGFSMGLGMALSLTILGAL), and 206–226 (SFLLFILPPGAFIGLGLLLAI).

Belongs to the NqrDE/RnfAE family. The complex is composed of six subunits: RnfA, RnfB, RnfC, RnfD, RnfE and RnfG.

Its subcellular location is the cell inner membrane. Functionally, part of a membrane-bound complex that couples electron transfer with translocation of ions across the membrane. This chain is Ion-translocating oxidoreductase complex subunit E, found in Haemophilus influenzae (strain 86-028NP).